The chain runs to 1254 residues: Zinc finger protein BRUTUS (1254 aa).

The interval 1–40 (MATPLPDFETARGGGAVASSSTTVLPSSVSSSSSSSRPLP) is disordered. Over residues 19-40 (SSSTTVLPSSVSSSSSSSRPLP) the composition is skewed to low complexity. A helical membrane pass occupies residues 201–221 (FLCSIPVNMLAVFLPWISSSI). The interval 893 to 913 (GSPDSSSTETSKPSPQKDNDH) is disordered. The segment covering 895–906 (PDSSSTETSKPS) has biased composition (polar residues). A CHY-type zinc finger spans residues 999–1068 (PEKQIYGCEH…PICTTPSCDG (70 aa)). Zn(2+)-binding residues include C1006, H1008, C1019, C1020, C1026, C1029, H1030, H1036, C1048, C1051, C1061, C1066, C1076, C1079, H1090, C1091, C1094, C1097, H1109, C1110, C1113, C1116, H1124, and C1126. The CTCHY-type zinc finger occupies 1071-1134 (MAKHYCSICK…KCLEKSLETN (64 aa)). The RING-type; atypical zinc-finger motif lies at 1135–1176 (CPICCEFLFTSSEAVRALPCGHYMHSACFQAYTCSHYTCPIC).

In terms of assembly, interacts with the PYEL proteins bHLH115, bHLH104 and ILR3 in the nucleus. Binds zinc and iron ions. In terms of tissue distribution, expressed in cotyledons of seedlings, young leaves, developing and mature embryos, and other reproductive tissues including floral vasculature, funiculus, septum, and gynoecium valves.

It localises to the membrane. The protein localises to the nucleus. Its pathway is protein modification; protein ubiquitination. Its function is as follows. Essential protein. Negatively regulates the response to iron deficiency and thus contributes to iron homeostasis. Exhibits E3 ubiquitin-protein ligase activity in vitro. Plays a role in root growth, rhizosphere acidification, and iron reductase activity in response to iron deprivation. Facilitates 26S proteasome-mediated degradation of PYEL proteins in the absence of iron. The protein is Zinc finger protein BRUTUS of Arabidopsis thaliana (Mouse-ear cress).